The chain runs to 398 residues: 1-deoxy-D-xylulose 5-phosphate reductoisomerase (398 aa).

NADPH-binding residues include threonine 10, glycine 11, serine 12, isoleucine 13, glycine 36, lysine 37, asparagine 38, and asparagine 124. Lysine 125 is a 1-deoxy-D-xylulose 5-phosphate binding site. Glutamate 126 is an NADPH binding site. A Mn(2+)-binding site is contributed by aspartate 150. Serine 151, glutamate 152, serine 186, and histidine 209 together coordinate 1-deoxy-D-xylulose 5-phosphate. Residue glutamate 152 participates in Mn(2+) binding. Glycine 215 serves as a coordination point for NADPH. The 1-deoxy-D-xylulose 5-phosphate site is built by serine 222, asparagine 227, lysine 228, and glutamate 231. A Mn(2+)-binding site is contributed by glutamate 231.

Belongs to the DXR family. As to quaternary structure, homodimer. It depends on Mg(2+) as a cofactor. The cofactor is Mn(2+).

The catalysed reaction is 2-C-methyl-D-erythritol 4-phosphate + NADP(+) = 1-deoxy-D-xylulose 5-phosphate + NADPH + H(+). It participates in isoprenoid biosynthesis; isopentenyl diphosphate biosynthesis via DXP pathway; isopentenyl diphosphate from 1-deoxy-D-xylulose 5-phosphate: step 1/6. Catalyzes the NADPH-dependent rearrangement and reduction of 1-deoxy-D-xylulose-5-phosphate (DXP) to 2-C-methyl-D-erythritol 4-phosphate (MEP). This Escherichia coli O157:H7 protein is 1-deoxy-D-xylulose 5-phosphate reductoisomerase.